A 98-amino-acid chain; its full sequence is Integration host factor subunit alpha (98 aa).

It belongs to the bacterial histone-like protein family. Heterodimer of an alpha and a beta chain.

Its function is as follows. This protein is one of the two subunits of integration host factor, a specific DNA-binding protein that functions in genetic recombination as well as in transcriptional and translational control. In Glaesserella parasuis serovar 5 (strain SH0165) (Haemophilus parasuis), this protein is Integration host factor subunit alpha.